Here is a 519-residue protein sequence, read N- to C-terminus: T-complex protein 11-like protein 2 (519 aa).

The tract at residues 1–30 (MPFNGEKQCVGEDQPSDSDSSRFSESMASL) is disordered. Ser16 is subject to Phosphoserine. Positions 17–29 (DSDSSRFSESMAS) are enriched in low complexity.

It belongs to the TCP11 family. In terms of assembly, interacts with FMNL2; this interaction promotes muscle-derived satellite cell (MDSC) migration and differentiation.

It is found in the cytoplasm. It localises to the cytoskeleton. Functionally, promotes the migration of muscle-derived satellite cells (MDSCs) during differentiation throught interaction with FMNL2 and therefore may participate in microfilament assembly. The sequence is that of T-complex protein 11-like protein 2 from Homo sapiens (Human).